The sequence spans 331 residues: Dioxygenase swnH2 (331 aa).

Residues 1–11 (MINSDAQSAQK) show a composition bias toward polar residues. Positions 1–31 (MINSDAQSAQKQVEVEKPDEKYSAPRLLPPI) are disordered. The span at 13 to 23 (VEVEKPDEKYS) shows a compositional bias: basic and acidic residues. Residues histidine 173, aspartate 175, and histidine 250 each contribute to the Fe cation site.

It belongs to the PhyH family. In terms of assembly, homodimer. Fe cation is required as a cofactor.

The protein operates within mycotoxin biosynthesis. In terms of biological role, dioxygenase; part of the gene cluster that mediates the biosynthesis of swainsonine (SW), a cytotoxic fungal alkaloid and a potential cancer therapy drug. Swainsonine production occurs via a multibranched pathway and is dispensable for fungal colonization of plants and infection of insect hosts. The first step of swainsonine biosynthesis is the production of the precursor pipecolic acid (PA) via conversion of L-lysine (Lys) to 1-piperideine-6-carboxylate (P6C) by the aminotransferase swnA, the latter being further reduced to PA by the reductase swnR. PA can be converted from lysine by both the SW biosynthetic cluster and the unclustered genes such as lysine cyclodeaminase. The PKS-NRPS hybrid synthetase swnK uptakes and condensates PA and malonyl-CoA with and without skipping of the ketoreductase (KR) domain in order to produce 3 intermediates, 1-oxoindolizidine, (1S)-1-hydroxyindolizin, and (1R)-1-hydroxyindolizine; with the transisomer (1S)-1-hydroxyindolizin being predominant. The terminal thioester reductase (TE) domain of swnK is involved in reduction of the thioester bond to release the intermediate aldehydes. The oxidoreductase swnN could contribute to the reduction of 1-oxoindolizidine to (1S)-1-hydroxyindolizin and (1R)-1-hydroxyindolizine, contributing to the major route of SW production. The dioxygenase swnH2 would be responsible for the oxidization of (1R)-1-hydroxyindolizine into (1R,2S)-1,2-dihydroxyindolizine and of (1S)-1-hydroxyindolizin to yield both (1R,2S)-1,2-dihydroxyindolizine and (1S,2S)-1,2-dihydroxyindolizine. The dioxygenase swnH1 then performs the conversion of the 1,2-dihydroxyindolizine epimers to SW. The protein is Dioxygenase swnH2 of Metarhizium robertsii (strain ARSEF 23 / ATCC MYA-3075) (Metarhizium anisopliae (strain ARSEF 23)).